Here is a 1090-residue protein sequence, read N- to C-terminus: Pullulanase (1090 aa).

A signal peptide spans 1–19 (MLRYTRNALVLGSLVLLSG). A lipid anchor (N-palmitoyl cysteine) is attached at cysteine 20. Residue cysteine 20 is the site of S-diacylglycerol cysteine attachment. The Nucleophile role is filled by aspartate 684. Glutamate 713 acts as the Proton donor in catalysis.

It belongs to the glycosyl hydrolase 13 family. Homotrimer.

The protein localises to the cell membrane. It carries out the reaction Hydrolysis of (1-&gt;6)-alpha-D-glucosidic linkages in pullulan, amylopectin and glycogen, and in the alpha- and beta-limit dextrins of amylopectin and glycogen.. The chain is Pullulanase (pulA) from Klebsiella pneumoniae.